We begin with the raw amino-acid sequence, 127 residues long: Gonadotropin subunit beta-1 (127 aa).

A signal peptide spans 1–22; it reads MHLAVTALCLTLAPVLARASTS. 6 disulfide bridges follow: Cys-23-Cys-71, Cys-37-Cys-86, Cys-40-Cys-124, Cys-48-Cys-102, Cys-52-Cys-104, and Cys-107-Cys-114. 2 N-linked (GlcNAc...) asparagine glycosylation sites follow: Asn-27 and Asn-44.

Belongs to the glycoprotein hormones subunit beta family. As to quaternary structure, heterodimer of an alpha and a beta chain.

The protein resides in the secreted. Involved in gametogenesis and steroidogenesis. This Anguilla japonica (Japanese eel) protein is Gonadotropin subunit beta-1 (cgba).